The sequence spans 277 residues: Diaminopimelate epimerase (277 aa).

Positions 13, 46, and 66 each coordinate substrate. Cysteine 75 functions as the Proton donor in the catalytic mechanism. Substrate is bound by residues glycine 76 to asparagine 77, asparagine 159, asparagine 192, and glutamate 210 to arginine 211. Residue cysteine 219 is the Proton acceptor of the active site. Residue glycine 220 to threonine 221 coordinates substrate.

It belongs to the diaminopimelate epimerase family. As to quaternary structure, homodimer.

Its subcellular location is the cytoplasm. It catalyses the reaction (2S,6S)-2,6-diaminopimelate = meso-2,6-diaminopimelate. It participates in amino-acid biosynthesis; L-lysine biosynthesis via DAP pathway; DL-2,6-diaminopimelate from LL-2,6-diaminopimelate: step 1/1. Its function is as follows. Catalyzes the stereoinversion of LL-2,6-diaminopimelate (L,L-DAP) to meso-diaminopimelate (meso-DAP), a precursor of L-lysine and an essential component of the bacterial peptidoglycan. This Aromatoleum aromaticum (strain DSM 19018 / LMG 30748 / EbN1) (Azoarcus sp. (strain EbN1)) protein is Diaminopimelate epimerase.